A 2343-amino-acid chain; its full sequence is Pecanex-like protein 1 (2343 aa).

2 consecutive transmembrane segments (helical) span residues 33–53 and 57–77; these read ALHLYLWLFLLGLPFTLYMAL and MIIVAVYCPVVAAVFIVLKMV. Disordered regions lie at residues 98 to 163, 271 to 290, 306 to 691, and 749 to 826; these read FTDQ…GSSR, SHSYRKEHRPRGVPRTSSSA, QQQR…TRAR, and TRSR…QGQQ. Polar residues predominate over residues 143-163; that stretch reads SSRNSYAGLDPSNQIGSGSSR. A compositionally biased stretch (basic residues) spans 272–282; sequence HSYRKEHRPRG. Residues 372-390 are compositionally biased toward low complexity; that stretch reads SLRSLSTRSSGSTESYCSG. Polar residues predominate over residues 396–412; sequence NSTLSSYKSEQTSSTHI. Basic and acidic residues-rich tracts occupy residues 416-457, 507-521, and 530-546; these read LSEH…DKTA, RPPEQSAESKEEQGE, and KVCKDDGGKQKEGDVRP. Basic residues predominate over residues 556–571; that stretch reads TSAHKPGRRRTGKKRA. 3 stretches are compositionally biased toward low complexity: residues 624–637, 769–780, and 809–826; these read SDSSSSATSHSCQS, AATGAAQASEEA, and TLLIGPPLSLQDGQQGQQ. 13 helical membrane passes run 978 to 998, 1009 to 1029, 1034 to 1054, 1068 to 1088, 1118 to 1138, 1162 to 1182, 1195 to 1215, 1268 to 1288, 1296 to 1316, 1406 to 1426, 1434 to 1454, 1458 to 1478, and 1493 to 1513; these read FWILPQLWIGINFDRLTLLAL, ILAVVLAILVAFLGSILLIQG, IWVFQFCLVIASCQYSLLKSV, IIAYSRPVYFCLCCGLIWLLD, LVIVFTLCFPIVFFIGLLPQV, LLAALYSFLCSVVAVALLYGL, HIPVLFSVFCGLLVAVSYHLS, LVVCVVIGVLYFAIHVSTVFT, YVLYALVGFVGLVTHYVLPQV, SFSSPTYQYITVIFTVLFFKF, TMLLDLFFMSILFSKLWELLY, FVYTYVAPWQITWGSAFHAFA, and AVVSALFSTPLNPFLGSAIFI. The disordered stretch occupies residues 2050-2120; sequence EDSDTGGGTS…VQSSLVRQSP (71 aa). Composition is skewed to polar residues over residues 2060 to 2080 and 2094 to 2117; these read CPANSATTASDPHNSVPQGST and PTTSYPPTLGTSHSAHSVQSSLVR.

The protein belongs to the pecanex family. Specifically expressed in the germ line and not in the somatic cells of the testis, reaching its peak at the pachytene stage of the meiotic prophase. Detected in pachytene spermatocytes and round spermatids (at protein level).

The protein resides in the membrane. This is Pecanex-like protein 1 from Rattus norvegicus (Rat).